The primary structure comprises 305 residues: Tyrosine recombinase XerC (305 aa).

The Core-binding (CB) domain occupies M1–V93. The 181-residue stretch at R114–D294 folds into the Tyr recombinase domain. Residues R155, K179, H246, R249, and H272 contribute to the active site. Y281 serves as the catalytic O-(3'-phospho-DNA)-tyrosine intermediate.

It belongs to the 'phage' integrase family. XerC subfamily. As to quaternary structure, forms a cyclic heterotetrameric complex composed of two molecules of XerC and two molecules of XerD.

The protein resides in the cytoplasm. Functionally, site-specific tyrosine recombinase, which acts by catalyzing the cutting and rejoining of the recombining DNA molecules. The XerC-XerD complex is essential to convert dimers of the bacterial chromosome into monomers to permit their segregation at cell division. It also contributes to the segregational stability of plasmids. The polypeptide is Tyrosine recombinase XerC (Neisseria gonorrhoeae (strain ATCC 700825 / FA 1090)).